Here is a 706-residue protein sequence, read N- to C-terminus: Phenylalanine--tRNA ligase beta subunit, chloroplastic (706 aa).

The 89-residue stretch at 300–388 (KVLKPIVLNY…RLHGFNNFLT (89 aa)) folds into the B5 domain. 4 residues coordinate Mg(2+): D366, D372, E375, and E376. An FDX-ACB domain is found at 612–705 (SVYPKIVKDL…LELKVQAILR (94 aa)).

Belongs to the phenylalanyl-tRNA synthetase beta subunit family. Type 1 subfamily. In terms of assembly, tetramer of two alpha and two beta subunits. It depends on Mg(2+) as a cofactor.

The protein resides in the plastid. It is found in the chloroplast. It catalyses the reaction tRNA(Phe) + L-phenylalanine + ATP = L-phenylalanyl-tRNA(Phe) + AMP + diphosphate + H(+). The sequence is that of Phenylalanine--tRNA ligase beta subunit, chloroplastic from Phaeodactylum tricornutum (strain CCAP 1055/1).